Here is a 722-residue protein sequence, read N- to C-terminus: MQVSSVNNVKIYNLSHGKSLPEWLSDRKKRVLQKKDVDIQRRIELIQDFEMPTVCTSIRVSRDGQYILAAGTYKPRVRCYDTYQLSLKFERCLDSDVVTFDILSDDYSKLVFLHIDRYVEFHSQHGHYYKTRIPKFGRDFSYHSPSCDLYFVGASSEVFRLNLEQGRFLNSLQTDAAEMNVCDINPVHQLFAAGTLEGRVDCWDPRVRTRVAALDCALSSITDNTEVEGLPSVSALKFNDSLGLAVGTSTGQILVYDLRSSRPLLVKDHYYGLPIKSLHFHNSLDLVLSADSKIIKMWNKDNGKVFSSIEPQANINDVCLYPASGMLFTANEDPKMNTFYIPALGPAPRWCSFLDNLTEELEENPESTIYDDYKFVTRKDLESLGLAHLIGSPLLRAYMHGFFMDIRLYHKVKTMVNPFAYEEYRKDKIRQKIEESRAQRVQLKKLPKVNKELALKLMEEDTELTNKKKKKKANVAGNLLMDDRFKVMFENPDYQVDERSEEFRLLNPIISNVAERRRKSLLEEEQEQAEEEQEPEGRGSSEDDSSDEDDKGWVQEVREQRRLLRMEERERSYIQRQERRQQDRNTRLQSSDTHTQQSHGAQKPRFYQIKSGEEFRSFSDVSRKQKTHKASLEERLQRLEKSDTLSLNDTAVGSKQLTFTLKKTEKQRFQQQAERDHHEERRRIRRSAGHLHSNRGGGRGRGGGRGRGGGRGRGGGRGRRPF.

WD repeat units lie at residues 50-90 (EMPT…LKFE), 174-213 (TDAA…RVAA), 228-266 (EGLP…PLLV), 270-308 (YYGL…VFSS), and 310-349 (EPQA…PAPR). 2 coiled-coil regions span residues 423–476 (EYRK…ANVA) and 511–534 (SNVA…EEQE). 4 disordered regions span residues 521 to 555 (LLEE…GWVQ), 572 to 607 (SYIQ…PRFY), 616 to 635 (RSFS…LEER), and 664 to 722 (TEKQ…RRPF). The segment covering 523 to 534 (EEEQEQAEEEQE) has biased composition (acidic residues). Over residues 572-586 (SYIQRQERRQQDRNT) the composition is skewed to basic and acidic residues. The segment covering 587 to 600 (RLQSSDTHTQQSHG) has biased composition (polar residues). The stretch at 620-681 (DVSRKQKTHK…QAERDHHEER (62 aa)) forms a coiled coil. Residues 664–682 (TEKQRFQQQAERDHHEERR) show a composition bias toward basic and acidic residues. Basic residues-rich tracts occupy residues 683-693 (RIRRSAGHLHS) and 702-722 (GGGR…RRPF).

Belongs to the WD repeat NOL10/ENP2 family.

The protein resides in the nucleus. It is found in the nucleolus. This Danio rerio (Zebrafish) protein is Nucleolar protein 10 (nol10).